Here is a 334-residue protein sequence, read N- to C-terminus: S-adenosylmethionine:tRNA ribosyltransferase-isomerase (334 aa).

It belongs to the QueA family. As to quaternary structure, monomer.

The protein resides in the cytoplasm. It carries out the reaction 7-aminomethyl-7-carbaguanosine(34) in tRNA + S-adenosyl-L-methionine = epoxyqueuosine(34) in tRNA + adenine + L-methionine + 2 H(+). It participates in tRNA modification; tRNA-queuosine biosynthesis. Its function is as follows. Transfers and isomerizes the ribose moiety from AdoMet to the 7-aminomethyl group of 7-deazaguanine (preQ1-tRNA) to give epoxyqueuosine (oQ-tRNA). The protein is S-adenosylmethionine:tRNA ribosyltransferase-isomerase of Aquifex aeolicus (strain VF5).